The sequence spans 374 residues: Aclacinomycin 10-hydroxylase RdmB (374 aa).

Residues Tyr171, Gly190, Glu213, Asp240, Phe241, and Ser255 each coordinate S-adenosyl-L-methionine.

The protein belongs to the class I-like SAM-binding methyltransferase superfamily. Cation-independent O-methyltransferase family. As to quaternary structure, homodimer. Homotetramer in solution. Tetramers might not be very stable in solution.

It catalyses the reaction 15-demethylaclacinomycin T + AH2 + O2 = 10-decarboxymethylaclacinomycin T + A + CO2 + H2O. It carries out the reaction 10-carboxy-13-deoxycarminomycin + AH2 + O2 + H(+) = 10-hydroxy-13-deoxycarminomycin + A + CO2 + H2O. The catalysed reaction is 10-hydroxy-13-deoxycarminomycin + S-adenosyl-L-methionine = 10-hydroxy-13-deoxydaunorubicin + S-adenosyl-L-homocysteine + H(+). It participates in antibiotic biosynthesis; rhodomycin biosynthesis. The protein operates within antibiotic biosynthesis; aclacinomycin biosynthesis. The hydroxylation reaction requires S-adenosyl-L-methionine (SAM) as a cofactor. S-adenosine-L-homocysteine and sinefungin (a SAM analog) can also support the decarboxylative hydroxylation activity with 10-carboxy-13-deoxycarminomycin as substrate. SAM and its analogs are considered an essential structural ligand to maintain ternary structural integrity and the proper binding mode and orientation of electron-rich substrates during decarboxylative hydroxylation of C-10 by RdmB. Involved in the biosynthesis of anthracyclines, an important group of aromatic polyketide antibiotics used in cancer chemotherapy. Acts as a 10-hydroxylase to catalyze a decarboxylative hydroxylation reaction on anthracyclines. During biosynthesis of rhodomycin, it catalyzes the removal of the carboxylic group at the C-10 position of 15-demethoxy-epsilon-rhodomycin coupled to hydroxylation at the same C-10 position to yield beta-rhodomycin. In vitro, can also catalyze the removal of the carboxylic group at the C-10 position of 15-demethoxyaclacinomycin T coupled to hydroxylation at the same C-10 position to yield 10-decarboxymethylaclacinomycin T. It can also use 10-carboxy-13-deoxycarminomycin, an analog of 15-demethoxy-epsilon-rhodomycin, to yield 10-hydroxy-13-deoxycarminomycin. Functionally, in addition to its hydroxylation activity, it can act in vitro as a S-adenosyl-L-methionine-dependent O-methyltransferase and catalyze the 4-O-methylation of 10-hydroxy-13-deoxycarminomycin to 10-hydroxy-13-deoxydaunorubicin. The triglycosyl group of anthracyclines prevents the methylation reaction. This chain is Aclacinomycin 10-hydroxylase RdmB, found in Streptomyces purpurascens.